Consider the following 257-residue polypeptide: Pyridoxal phosphate homeostasis protein (257 aa).

K47 carries the post-translational modification N6-(pyridoxal phosphate)lysine.

It belongs to the pyridoxal phosphate-binding protein YggS/PROSC family.

Pyridoxal 5'-phosphate (PLP)-binding protein, which is involved in PLP homeostasis. In Mycobacterium leprae (strain TN), this protein is Pyridoxal phosphate homeostasis protein.